The sequence spans 170 residues: MKLHDLRPAEGSHRKRKRIGRGHGSGKVKTGGKGMMGQKARSGPGPYRTFEGGQNRLVKRMPFKRGFTNKFRVEYEVVNVGSLVDWPTELEVTPETLLARRLVRRKKMPVKILGDGELNQPLVIKAHKFSASARQKIEAAGGKAIDLTWIVERHSRSRGPNPSMRNARQS.

The segment covering 1-12 (MKLHDLRPAEGS) has biased composition (basic and acidic residues). The segment at 1–50 (MKLHDLRPAEGSHRKRKRIGRGHGSGKVKTGGKGMMGQKARSGPGPYRTF) is disordered. Basic residues predominate over residues 13–26 (HRKRKRIGRGHGSG).

The protein belongs to the universal ribosomal protein uL15 family. In terms of assembly, part of the 50S ribosomal subunit.

Functionally, binds to the 23S rRNA. The polypeptide is Large ribosomal subunit protein uL15 (Chloroflexus aggregans (strain MD-66 / DSM 9485)).